A 135-amino-acid chain; its full sequence is Large ribosomal subunit protein uL16c (135 aa).

It belongs to the universal ribosomal protein uL16 family. As to quaternary structure, part of the 50S ribosomal subunit.

It is found in the plastid. The protein resides in the chloroplast. The chain is Large ribosomal subunit protein uL16c from Lactuca sativa (Garden lettuce).